Consider the following 96-residue polypeptide: UPF0235 protein SO_3356 (96 aa).

The protein belongs to the UPF0235 family.

The protein is UPF0235 protein SO_3356 of Shewanella oneidensis (strain ATCC 700550 / JCM 31522 / CIP 106686 / LMG 19005 / NCIMB 14063 / MR-1).